A 441-amino-acid polypeptide reads, in one-letter code: Tubulin beta chain, nucleomorph (441 aa).

Positions 11, 69, 138, 142, 143, 144, 204, and 226 each coordinate GTP. Residue Glu69 participates in Mg(2+) binding.

This sequence belongs to the tubulin family. As to quaternary structure, dimer of alpha and beta chains. A typical microtubule is a hollow water-filled tube with an outer diameter of 25 nm and an inner diameter of 15 nM. Alpha-beta heterodimers associate head-to-tail to form protofilaments running lengthwise along the microtubule wall with the beta-tubulin subunit facing the microtubule plus end conferring a structural polarity. Microtubules usually have 13 protofilaments but different protofilament numbers can be found in some organisms and specialized cells. Mg(2+) serves as cofactor.

Functionally, tubulin is the major constituent of microtubules, a cylinder consisting of laterally associated linear protofilaments composed of alpha- and beta-tubulin heterodimers. Microtubules grow by the addition of GTP-tubulin dimers to the microtubule end, where a stabilizing cap forms. Below the cap, tubulin dimers are in GDP-bound state, owing to GTPase activity of alpha-tubulin. This is Tubulin beta chain, nucleomorph (tubB) from Guillardia theta (Cryptophyte).